The sequence spans 126 residues: Putative 15 kDa capsid protein (126 aa).

The protein localises to the virion. The protein is Putative 15 kDa capsid protein (P15) of Bombyx mori nuclear polyhedrosis virus (BmNPV).